A 361-amino-acid chain; its full sequence is Trans-2,3-enoyl-CoA reductase-like (361 aa).

Residues Ser-33 and Ser-35 each carry the phosphoserine modification. Helical transmembrane passes span 139-159 (VGWTTVFLAEYSGPLLIYLLF), 181-201 (VHLAFFCHCIHYIRLLLETLF), 215-235 (LIKGCAFYWGFTSWMAYYINH), and 309-329 (ISFTVMTQTLPVGIFTILMTI).

The protein belongs to the steroid 5-alpha reductase family. As to expression, expression is highest in the heart with very low to almost undetectable levels in brain, skeletal muscle, stomach, pancreas, liver, kidney, small intestine, and uterus.

It is found in the membrane. Its subcellular location is the endoplasmic reticulum. This chain is Trans-2,3-enoyl-CoA reductase-like (Tecrl), found in Mus musculus (Mouse).